Reading from the N-terminus, the 423-residue chain is Putative competence-damage inducible protein (423 aa).

Belongs to the CinA family.

The sequence is that of Putative competence-damage inducible protein from Streptococcus equi subsp. equi (strain 4047).